The chain runs to 50 residues: Large ribosomal subunit protein bL33 (50 aa).

It belongs to the bacterial ribosomal protein bL33 family.

This is Large ribosomal subunit protein bL33 from Mycoplasmopsis synoviae (strain 53) (Mycoplasma synoviae).